We begin with the raw amino-acid sequence, 343 residues long: UDP-3-O-acylglucosamine N-acyltransferase 2 (343 aa).

The Proton acceptor role is filled by H251.

The protein belongs to the transferase hexapeptide repeat family. LpxD subfamily. Homotrimer.

It carries out the reaction a UDP-3-O-[(3R)-3-hydroxyacyl]-alpha-D-glucosamine + a (3R)-hydroxyacyl-[ACP] = a UDP-2-N,3-O-bis[(3R)-3-hydroxyacyl]-alpha-D-glucosamine + holo-[ACP] + H(+). Its pathway is bacterial outer membrane biogenesis; LPS lipid A biosynthesis. Functionally, catalyzes the N-acylation of UDP-3-O-acylglucosamine using 3-hydroxyacyl-ACP as the acyl donor. Is involved in the biosynthesis of lipid A, a phosphorylated glycolipid that anchors the lipopolysaccharide to the outer membrane of the cell. The sequence is that of UDP-3-O-acylglucosamine N-acyltransferase 2 from Legionella pneumophila (strain Lens).